The following is a 702-amino-acid chain: Ribosomal RNA large subunit methyltransferase K/L (702 aa).

One can recognise a THUMP domain in the interval 43–154; it reads LIYQSLMWSR…KETASIALDL (112 aa).

This sequence belongs to the methyltransferase superfamily. RlmKL family.

It is found in the cytoplasm. It catalyses the reaction guanosine(2445) in 23S rRNA + S-adenosyl-L-methionine = N(2)-methylguanosine(2445) in 23S rRNA + S-adenosyl-L-homocysteine + H(+). The catalysed reaction is guanosine(2069) in 23S rRNA + S-adenosyl-L-methionine = N(2)-methylguanosine(2069) in 23S rRNA + S-adenosyl-L-homocysteine + H(+). Its function is as follows. Specifically methylates the guanine in position 2445 (m2G2445) and the guanine in position 2069 (m7G2069) of 23S rRNA. This is Ribosomal RNA large subunit methyltransferase K/L from Salmonella agona (strain SL483).